We begin with the raw amino-acid sequence, 826 residues long: Hyaluronate lyase HylA (826 aa).

A signal peptide (tat-type signal) is located at residues 1-36 (MFDIPYQVPSRRTFLSLSALSAIAIAASPEMPDAFA). Catalysis depends on residues histidine 276, tyrosine 285, and arginine 339. The disordered stretch occupies residues 800–826 (LSPALPKPTKPSLRASSYPLGLPHTSS).

It belongs to the polysaccharide lyase 8 family. Post-translationally, predicted to be exported by the Tat system. The position of the signal peptide cleavage has not been experimentally proven.

It localises to the secreted. It carries out the reaction [hyaluronan](n) = n 3-(4-deoxy-beta-D-gluc-4-enuronosyl)-N-acetyl-D-glucosamine + H2O. Its function is as follows. Degrades hyaluronic acid (HA) into large-sized HA oligosaccharides, including tetrasaccharide HA (HA-4), hexasaccharide HA (HA-6) and higher molecular weight HA, and to a lesser extent into HA disaccharides (HA-2). Involved in the pathogenesis of acne. HA degradation products induce secretion of proinflammatory cytokines (IL-6, IL-8 and TNF-alpha) from human HaCaT keratinocyte cell line and from mouse bone marrow derived macrophages (BMDMs). Produced HA fragments also direct robust TLR2-dependent inflammation in the mouse model of acne. The protein is Hyaluronate lyase HylA of Cutibacterium acnes (Propionibacterium acnes).